The primary structure comprises 430 residues: Enolase (430 aa).

(2R)-2-phosphoglycerate is bound at residue Gln-163. Glu-205 functions as the Proton donor in the catalytic mechanism. Residues Asp-242, Glu-287, and Asp-314 each coordinate Mg(2+). 4 residues coordinate (2R)-2-phosphoglycerate: Lys-339, Arg-368, Ser-369, and Lys-390. Lys-339 (proton acceptor) is an active-site residue.

Belongs to the enolase family. Mg(2+) is required as a cofactor.

Its subcellular location is the cytoplasm. The protein resides in the secreted. It localises to the cell surface. It catalyses the reaction (2R)-2-phosphoglycerate = phosphoenolpyruvate + H2O. The protein operates within carbohydrate degradation; glycolysis; pyruvate from D-glyceraldehyde 3-phosphate: step 4/5. In terms of biological role, catalyzes the reversible conversion of 2-phosphoglycerate (2-PG) into phosphoenolpyruvate (PEP). It is essential for the degradation of carbohydrates via glycolysis. The sequence is that of Enolase from Clostridioides difficile (strain 630) (Peptoclostridium difficile).